We begin with the raw amino-acid sequence, 382 residues long: Galactokinase (382 aa).

34 to 37 is a substrate binding site; the sequence is EHTD. 124 to 130 lines the ATP pocket; it reads GAGLSSS. Mg(2+) contacts are provided by Ser130 and Glu162. Asp174 (proton acceptor) is an active-site residue. Tyr223 lines the substrate pocket.

The protein belongs to the GHMP kinase family. GalK subfamily.

The protein resides in the cytoplasm. The enzyme catalyses alpha-D-galactose + ATP = alpha-D-galactose 1-phosphate + ADP + H(+). It participates in carbohydrate metabolism; galactose metabolism. Functionally, catalyzes the transfer of the gamma-phosphate of ATP to D-galactose to form alpha-D-galactose-1-phosphate (Gal-1-P). This Aeromonas hydrophila subsp. hydrophila (strain ATCC 7966 / DSM 30187 / BCRC 13018 / CCUG 14551 / JCM 1027 / KCTC 2358 / NCIMB 9240 / NCTC 8049) protein is Galactokinase.